The chain runs to 154 residues: uncharacterized protein (154 aa).

2 coiled-coil regions span residues 8–48 (DEEV…AIEA) and 89–138 (VQEL…RGLV).

This is an uncharacterized protein from Treponema pallidum (strain Nichols).